The chain runs to 179 residues: Ribosome maturation factor RimP (179 aa).

Belongs to the RimP family.

The protein resides in the cytoplasm. Functionally, required for maturation of 30S ribosomal subunits. In Prosthecochloris aestuarii (strain DSM 271 / SK 413), this protein is Ribosome maturation factor RimP.